Reading from the N-terminus, the 493-residue chain is MEKVREIVREGIRVGNEDPRRIIHAFKVGLALVLVSSFYYYQPFGPFTDYFGINAMWAVMTVVVVFEFSVGATLGKGLNRGVATLVAGGLGIGAHQLARLSGATVEPILLVMLVFVQAALSTFVRFFPWVKTKFDYGILIFILTFALISLSGFRDEEIMDLAESRLSTVVIGGVSCILISIFVCPVWAGQDLHSLLASNFDTLSHFLQDFGDEYFEAREKGDYKVVEKRKKNLERYKSVLDSKSDEEALANYAEWEPPHGQFRFRHPWKQYVAVGALLRQCAYRIDALNSYINSDFQIPVDIKKKLETPLRRMSSESGNSMKEMSISLKQMIKSSSSDIHVSNSQAACKSLSTLLKSGILNDVEPLQMISLMTTVSMLIDIVNLTEKISESVHELASAARFKNKMRPTVLYEKSDSGSIGRAMPIDSHEDHHVVTVLHDVDNDRSNNVDDSRGGSSQDSCHHVAIKIVDDNSNHEKHEDGEIHVHTLSNGHLQ.

A run of 5 helical transmembrane segments spans residues 28 to 48 (VGLA…GPFT), 51 to 71 (FGIN…FSVG), 104 to 124 (TVEP…STFV), 133 to 153 (KFDY…LSGF), and 169 to 189 (VVIG…VWAG). Phosphoserine is present on residues serine 320 and serine 327. Threonine 385 is subject to Phosphothreonine. Positions 441-452 (DNDRSNNVDDSR) are enriched in basic and acidic residues. The interval 441-460 (DNDRSNNVDDSRGGSSQDSC) is disordered.

Belongs to the aromatic acid exporter (TC 2.A.85) family. Post-translationally, phosphorylated. A reversible phosphorylation is required for activation. As to expression, expressed in roots, but not in shoots. Detected in the root apex in absence of aluminum stress and in root apices, the stele and endodermis of the elongating zone of primary and lateral roots after aluminum stress. Not expressed in cortical and epidermal cells.

It is found in the cell membrane. Its activity is regulated as follows. Activated by external aluminum. In terms of biological role, malate transporter critical for aluminum tolerance. The STOP1 transcription factor is required for ALMT1 expression. The polypeptide is Aluminum-activated malate transporter 1 (ALMT1) (Arabidopsis thaliana (Mouse-ear cress)).